Reading from the N-terminus, the 132-residue chain is Large ribosomal subunit protein uL14 (132 aa).

Belongs to the universal ribosomal protein uL14 family. In terms of assembly, part of the 50S ribosomal subunit. Forms a cluster with proteins L3 and L24e, part of which may contact the 16S rRNA in 2 intersubunit bridges.

Binds to 23S rRNA. Forms part of two intersubunit bridges in the 70S ribosome. This Methanosarcina barkeri (strain Fusaro / DSM 804) protein is Large ribosomal subunit protein uL14.